Reading from the N-terminus, the 153-residue chain is UPF0260 protein YcgN (153 aa).

It belongs to the UPF0260 family.

This is UPF0260 protein YcgN from Salmonella typhi.